The following is a 514-amino-acid chain: MIKRALISVSDKTGIVEFASALASKGIEIISTGGTAKALSAAGLKVINISDITGFPECLDGRVKTLHPKVHAGLLAIRSNEEHMKQIKELGVETIDMVIINLYPFKQTILKGNVELEEAIENIDIGGPTMLRAAAKNYQDVAVIVDPADYKNVLNEMNESGDVSVKTKFRLAYKVFEHTSHYDTLIAKYLRDTLGDIDFPETLSLTYEKAQDMRYGENPHQKAVFYKEVGANTGLLPSAVQLHGKELSFNNINDTNGAIELVKEFDEPTVVAVKHTNPCGVGSADNIYDAYMRAYESDPVSIFGGIIAANREIDAKTAEEINKIFVEIVVAPSFTEDALAVLTQKKNVRLLKLENITDEISPDAYDMKKVAGGLLVQKYNSQLFNQEDLKCVTDVQPTKEQMEDLVFAMKVVKHTKSNAITLAKGKMTIGVGPGQTNRIVPTKVSIEYAGERSQGAVMASDAYFPFSDCVEAAAAAGIKAIIQPGGSIRDQESIDACNKYGIAMVFTGMRHFKH.

The MGS-like domain maps to 1–145; that stretch reads MIKRALISVS…KNYQDVAVIV (145 aa).

It belongs to the PurH family.

The catalysed reaction is (6R)-10-formyltetrahydrofolate + 5-amino-1-(5-phospho-beta-D-ribosyl)imidazole-4-carboxamide = 5-formamido-1-(5-phospho-D-ribosyl)imidazole-4-carboxamide + (6S)-5,6,7,8-tetrahydrofolate. It carries out the reaction IMP + H2O = 5-formamido-1-(5-phospho-D-ribosyl)imidazole-4-carboxamide. It participates in purine metabolism; IMP biosynthesis via de novo pathway; 5-formamido-1-(5-phospho-D-ribosyl)imidazole-4-carboxamide from 5-amino-1-(5-phospho-D-ribosyl)imidazole-4-carboxamide (10-formyl THF route): step 1/1. The protein operates within purine metabolism; IMP biosynthesis via de novo pathway; IMP from 5-formamido-1-(5-phospho-D-ribosyl)imidazole-4-carboxamide: step 1/1. The protein is Bifunctional purine biosynthesis protein PurH of Ruminiclostridium cellulolyticum (strain ATCC 35319 / DSM 5812 / JCM 6584 / H10) (Clostridium cellulolyticum).